Here is a 443-residue protein sequence, read N- to C-terminus: MSKLNMTPREIVAYLDEYIIGQKEAKKSIAIAFRNRYRRLQLEKSLQEEITPKNILMIGSTGVGKTEIARRIAKIMELPFVKVEASKYTEVGFVGRDVESMVRDLVNNSVLLVENEHKEKLKDKIEEAVVEKIAKKLLPPLPNGVSEEKKQEYANSLLKMQQRIVQGELDSREIEIEVRKKSIEIDSNVPPEILRVQENLIKVFHKEQDKVKKTLSVKEAKEALKAEISDTLLDSEAIKMEGLKRAESSGVIFIDEIDKIAVSSKEGSRQDPSKEGVQRDLLPIVEGSVVNTKYGSIKTEHILFIAAGAFHLSKPSDLIPELQGRFPLRVELENLTEEIMYMILTQTKTSIIKQYQALLQVEGVGIAFEDDAIKELAKLSYNANQKSEDIGARRLHTTIEKVLEDISFEAEDYLGQKVTITKELVQSKLEDLVADENLVKYIL.

Residues I20, 62–67 (GVGKTE), D255, E321, and R393 contribute to the ATP site.

The protein belongs to the ClpX chaperone family. HslU subfamily. A double ring-shaped homohexamer of HslV is capped on each side by a ring-shaped HslU homohexamer. The assembly of the HslU/HslV complex is dependent on binding of ATP.

The protein resides in the cytoplasm. In terms of biological role, ATPase subunit of a proteasome-like degradation complex; this subunit has chaperone activity. The binding of ATP and its subsequent hydrolysis by HslU are essential for unfolding of protein substrates subsequently hydrolyzed by HslV. HslU recognizes the N-terminal part of its protein substrates and unfolds these before they are guided to HslV for hydrolysis. This chain is ATP-dependent protease ATPase subunit HslU, found in Helicobacter pylori (strain HPAG1).